Consider the following 159-residue polypeptide: 3-hydroxyacyl-[acyl-carrier-protein] dehydratase FabZ (159 aa).

The active site involves His62.

Belongs to the thioester dehydratase family. FabZ subfamily.

It localises to the cytoplasm. It carries out the reaction a (3R)-hydroxyacyl-[ACP] = a (2E)-enoyl-[ACP] + H2O. Involved in unsaturated fatty acids biosynthesis. Catalyzes the dehydration of short chain beta-hydroxyacyl-ACPs and long chain saturated and unsaturated beta-hydroxyacyl-ACPs. The sequence is that of 3-hydroxyacyl-[acyl-carrier-protein] dehydratase FabZ from Methylobacterium nodulans (strain LMG 21967 / CNCM I-2342 / ORS 2060).